We begin with the raw amino-acid sequence, 453 residues long: Maltotriose-binding protein (453 aa).

Positions 1-29 are cleaved as a signal peptide; sequence MKRGIYAVLLVGVLIFSVVASGCIGGTQT. The span at 27–65 shows a compositional bias: low complexity; sequence TQTQTETQTPEKTQTPTTTQPSPTTTTSPTQTTSQTPTE. The interval 27–73 is disordered; that stretch reads TQTQTETQTPEKTQTPTTTQPSPTTTTSPTQTTSQTPTETETHTQEA.

It belongs to the bacterial solute-binding protein 1 family.

Functionally, involved in an abc transport system for maltotriose. This Pyrococcus abyssi (strain GE5 / Orsay) protein is Maltotriose-binding protein (malE).